Here is a 254-residue protein sequence, read N- to C-terminus: Receptor expression-enhancing protein 3 (254 aa).

The next 3 membrane-spanning stretches (helical) occupy residues 1-21 (MVSW…YPAY), 35-55 (YVRW…ETVA), and 59-79 (LAWF…LLSP). Positions 162–232 (DEPVGHRPYQ…QSMKSVKTIK (71 aa)) are disordered. Positions 198–212 (EQTDEEAEGPFSDDE) are enriched in acidic residues. Threonine 200 bears the Phosphothreonine mark. Serine 209 bears the Phosphoserine mark.

Belongs to the DP1 family.

The protein localises to the endoplasmic reticulum membrane. Functionally, microtubule-binding protein required to ensure proper cell division and nuclear envelope reassembly by sequestering the endoplasmic reticulum away from chromosomes during mitosis. Probably acts by clearing the endoplasmic reticulum membrane from metaphase chromosomes. The chain is Receptor expression-enhancing protein 3 (Reep3) from Mus musculus (Mouse).